A 240-amino-acid chain; its full sequence is Ribonuclease HII (240 aa).

The region spanning 7–215 (RYAIGIDEAG…LKRIAPGWYV (209 aa)) is the RNase H type-2 domain. A divalent metal cation-binding residues include aspartate 13, glutamate 14, and aspartate 112.

It belongs to the RNase HII family. Mn(2+) serves as cofactor. Mg(2+) is required as a cofactor.

The protein resides in the cytoplasm. The catalysed reaction is Endonucleolytic cleavage to 5'-phosphomonoester.. In terms of biological role, endonuclease that specifically degrades the RNA of RNA-DNA hybrids. In Hyperthermus butylicus (strain DSM 5456 / JCM 9403 / PLM1-5), this protein is Ribonuclease HII.